Consider the following 131-residue polypeptide: Transcription antitermination protein NusB (131 aa).

This sequence belongs to the NusB family.

Involved in transcription antitermination. Required for transcription of ribosomal RNA (rRNA) genes. Binds specifically to the boxA antiterminator sequence of the ribosomal RNA (rrn) operons. This is Transcription antitermination protein NusB from Campylobacter curvus (strain 525.92).